Reading from the N-terminus, the 808-residue chain is Ribosome biogenesis protein BOP1 homolog (808 aa).

The segment at 1–56 (MTSPKGKPSPKRSAPAPTTAALTPRTEERTEGATSSASASASSHISSSFDSPRDDT) is disordered. Low complexity-rich tracts occupy residues 12-24 (RSAPAPTTAALTP) and 33-50 (ATSSASASASSHISSSFD). WD repeat units lie at residues 430–469 (GHTATVRSVSVSPNGQYLATGCDDHLVRVFEVQTGRLMKR), 640–680 (KFSE…RRFK), 682–720 (SGGVTTCLSIHPEGDNFLVGDTTSHTSWFDMDFSDKPYK), 724–766 (SHRG…DYNK), and 777–808 (KHQRPVYAVAWHPTLAWLFTSTEDGVVTAWTE).

This sequence belongs to the WD repeat BOP1/ERB1 family.

The protein resides in the nucleus. The protein localises to the nucleolus. It localises to the nucleoplasm. Its function is as follows. Required for maturation of ribosomal RNAs and formation of the large ribosomal subunit. The sequence is that of Ribosome biogenesis protein BOP1 homolog from Leishmania infantum.